Reading from the N-terminus, the 338-residue chain is Photosystem II assembly lipoprotein Ycf48 (338 aa).

An N-terminal signal peptide occupies residues 1-23 (MKRLFSNVINLTLVLIVGVALSG). C24 is lipidated: N-palmitoyl cysteine. The S-diacylglycerol cysteine moiety is linked to residue C24.

It belongs to the Ycf48 family. Part of early PSII assembly complexes which includes D1 (psbA) and PsbI; not found in mature PSII. Binds to the lumenal side of PSII complexes. Interacts with YidC.

The protein resides in the cellular thylakoid membrane. A factor required for optimal assembly of photosystem II (PSII), acting in the early stages of PSII assembly. Also plays a role in replacement of photodamaged D1 (psbA). Assists YidC in synthesis of chlorophyll-binding proteins. This is Photosystem II assembly lipoprotein Ycf48 from Prochlorococcus marinus (strain NATL2A).